The sequence spans 151 residues: 3-dehydroquinate dehydratase (151 aa).

Tyr-24 acts as the Proton acceptor in catalysis. Residues Asn-76, His-82, and Asp-89 each contribute to the substrate site. His-102 acts as the Proton donor in catalysis. Substrate-binding positions include 103–104 (VS) and Arg-113.

This sequence belongs to the type-II 3-dehydroquinase family. As to quaternary structure, homododecamer.

The enzyme catalyses 3-dehydroquinate = 3-dehydroshikimate + H2O. Its pathway is metabolic intermediate biosynthesis; chorismate biosynthesis; chorismate from D-erythrose 4-phosphate and phosphoenolpyruvate: step 3/7. Its function is as follows. Catalyzes a trans-dehydration via an enolate intermediate. The sequence is that of 3-dehydroquinate dehydratase from Rhodopseudomonas palustris (strain TIE-1).